A 33-amino-acid chain; its full sequence is rho operon leader peptide (33 aa).

Residues 1–25 (MRSEQISGSSLNPSCRFSSAYSPVT) are compositionally biased toward polar residues. The segment at 1–33 (MRSEQISGSSLNPSCRFSSAYSPVTRQRKDMSR) is disordered.

This Escherichia coli O157:H7 protein is rho operon leader peptide (rhoL).